Consider the following 427-residue polypeptide: ETS domain-containing protein Elk-1 (427 aa).

The ETS DNA-binding region spans 5–86 (VTLWQFLLQL…SGQKFVYKFV (82 aa)). Disordered stretches follow at residues 116 to 146 (ATVH…GLAR), 166 to 202 (LQPQ…SPNP), and 226 to 252 (PNQK…VEGP). Glycyl lysine isopeptide (Lys-Gly) (interchain with G-Cter in SUMO) cross-links involve residues K229, K248, and K253. Polar residues predominate over residues 300–310 (STSTTEITQPQ). The disordered stretch occupies residues 300-350 (STSTTEITQPQKGRKPRDLELPLSPSLLGGQGPERTPGSGTSSGLQAQGPA). Position 323 is a phosphoserine; by MAPK1 (S323). Phosphothreonine; by MAPK1 occurs at positions 335, 352, 362, and 367. Residues 348 to 398 (GPALTPSLLPTHTLTPVLLTPSSLPPSIHFWSTLSPIAPRSPAKLSFQFPS) are sufficient for interaction with MAD2L2. The O-linked (GlcNAc) threonine glycan is linked to T380. S382 carries the phosphoserine; by MAPK1 and MAPK8 modification. S388 is subject to Phosphoserine; by MAPK1. Residue T416 is modified to Phosphothreonine; by MAPK1. The residue at position 421 (S421) is a Phosphoserine; by MAPK1.

Belongs to the ETS family. As to quaternary structure, interacts in its sumoylated form with PIAS2/PIASX which enhances its transcriptional activator activity. Interacts with MAD2L2; the interaction is direct and promotes phosphorylation by the kinases MAPK8 and/or MAPK9. Interacts with POU1F1. Sumoylation represses transcriptional activator activity as it results in recruitment of HDAC2 to target gene promoters which leads to decreased histone acetylation and reduced transactivator activity. It also regulates nuclear retention. In terms of processing, on mitogenic stimulation, phosphorylated on C-terminal serine and threonine residues by MAPK1. Ser-382 and Ser-388 are the preferred sites for MAPK1. In vitro, phosphorylation by MAPK1 potentiates ternary complex formation with the serum responses factors, SRE and SRF. Also phosphorylated on Ser-382 by MAPK8 and/or MAKP9. Phosphorylation leads to loss of sumoylation and restores transcriptional activator activity. Phosphorylated and activated by CAMK4, MAPK11, MAPK12 and MAPK14. Upon bFGF stimulus, phosphorylated by PAK1. Phosphorylated by PRP4K at Thr-416; phosphorylation activation ELK1 transcriptional activity.

Its subcellular location is the nucleus. Functionally, transcription factor that binds to purine-rich DNA sequences. Forms a ternary complex with SRF and the ETS and SRF motifs of the serum response element (SRE) on the promoter region of immediate early genes such as FOS and IER2. Induces target gene transcription upon JNK and MAPK-signaling pathways stimulation. The polypeptide is ETS domain-containing protein Elk-1 (Rattus norvegicus (Rat)).